The following is a 264-amino-acid chain: Phosphatidylserine decarboxylase proenzyme (264 aa).

Residues D86, H142, and S226 each act as charge relay system; for autoendoproteolytic cleavage activity in the active site. The active-site Schiff-base intermediate with substrate; via pyruvic acid; for decarboxylase activity is S226. S226 is modified (pyruvic acid (Ser); by autocatalysis).

Belongs to the phosphatidylserine decarboxylase family. PSD-B subfamily. Prokaryotic type I sub-subfamily. As to quaternary structure, heterodimer of a large membrane-associated beta subunit and a small pyruvoyl-containing alpha subunit. It depends on pyruvate as a cofactor. Post-translationally, is synthesized initially as an inactive proenzyme. Formation of the active enzyme involves a self-maturation process in which the active site pyruvoyl group is generated from an internal serine residue via an autocatalytic post-translational modification. Two non-identical subunits are generated from the proenzyme in this reaction, and the pyruvate is formed at the N-terminus of the alpha chain, which is derived from the carboxyl end of the proenzyme. The autoendoproteolytic cleavage occurs by a canonical serine protease mechanism, in which the side chain hydroxyl group of the serine supplies its oxygen atom to form the C-terminus of the beta chain, while the remainder of the serine residue undergoes an oxidative deamination to produce ammonia and the pyruvoyl prosthetic group on the alpha chain. During this reaction, the Ser that is part of the protease active site of the proenzyme becomes the pyruvoyl prosthetic group, which constitutes an essential element of the active site of the mature decarboxylase.

Its subcellular location is the cell membrane. It carries out the reaction a 1,2-diacyl-sn-glycero-3-phospho-L-serine + H(+) = a 1,2-diacyl-sn-glycero-3-phosphoethanolamine + CO2. Its pathway is phospholipid metabolism; phosphatidylethanolamine biosynthesis; phosphatidylethanolamine from CDP-diacylglycerol: step 2/2. Its function is as follows. Catalyzes the formation of phosphatidylethanolamine (PtdEtn) from phosphatidylserine (PtdSer). The polypeptide is Phosphatidylserine decarboxylase proenzyme (Geobacillus kaustophilus (strain HTA426)).